We begin with the raw amino-acid sequence, 692 residues long: Elongation factor G (692 aa).

Positions 8-282 constitute a tr-type G domain; sequence ENTRNIGIMA…AVIDYLPSPL (275 aa). GTP contacts are provided by residues 17-24, 81-85, and 135-138; these read AHIDAGKT, DTPGH, and NKMD.

The protein belongs to the TRAFAC class translation factor GTPase superfamily. Classic translation factor GTPase family. EF-G/EF-2 subfamily.

It localises to the cytoplasm. In terms of biological role, catalyzes the GTP-dependent ribosomal translocation step during translation elongation. During this step, the ribosome changes from the pre-translocational (PRE) to the post-translocational (POST) state as the newly formed A-site-bound peptidyl-tRNA and P-site-bound deacylated tRNA move to the P and E sites, respectively. Catalyzes the coordinated movement of the two tRNA molecules, the mRNA and conformational changes in the ribosome. This chain is Elongation factor G, found in Bacillus cereus (strain G9842).